We begin with the raw amino-acid sequence, 119 residues long: Large ribosomal subunit protein bL19 (119 aa).

The protein belongs to the bacterial ribosomal protein bL19 family.

In terms of biological role, this protein is located at the 30S-50S ribosomal subunit interface and may play a role in the structure and function of the aminoacyl-tRNA binding site. The sequence is that of Large ribosomal subunit protein bL19 from Pseudarthrobacter chlorophenolicus (strain ATCC 700700 / DSM 12829 / CIP 107037 / JCM 12360 / KCTC 9906 / NCIMB 13794 / A6) (Arthrobacter chlorophenolicus).